A 440-amino-acid polypeptide reads, in one-letter code: D-serine dehydratase (440 aa).

Residue Lys116 is modified to N6-(pyridoxal phosphate)lysine.

This sequence belongs to the serine/threonine dehydratase family. DsdA subfamily. As to quaternary structure, monomer. Pyridoxal 5'-phosphate serves as cofactor.

It carries out the reaction D-serine = pyruvate + NH4(+). The protein is D-serine dehydratase of Salmonella typhi.